The sequence spans 117 residues: Large ribosomal subunit protein bL20c (117 aa).

The protein belongs to the bacterial ribosomal protein bL20 family.

Its subcellular location is the plastid. It is found in the chloroplast. In terms of biological role, binds directly to 23S ribosomal RNA and is necessary for the in vitro assembly process of the 50S ribosomal subunit. It is not involved in the protein synthesizing functions of that subunit. The chain is Large ribosomal subunit protein bL20c from Phalaenopsis aphrodite subsp. formosana (Moth orchid).